The following is a 367-amino-acid chain: Porin Omp2a (367 aa).

An N-terminal signal peptide occupies residues 1–22 (MNIKSLLLGSAAALVAASGAQA).

This sequence belongs to the alphaproteobacteria porin family. In terms of assembly, monomer.

It is found in the cell outer membrane. Forms passive diffusion pores that allow small molecular weight hydrophilic materials across the outer membrane. This is Porin Omp2a (omp2a) from Brucella suis.